A 333-amino-acid chain; its full sequence is MIDTTLPLTDIHRHLDGNIRPQTILELGRQYNILLPAQSLETLIPHVQVIANEPDLVSFLTKLDWGVKVLASLDACRRVAFENIEDAARNGLHYVELHFSPGYMAMAHQLPVAGVVEAVIDGVREGCRTFGVQAKLIGIMSRTFGEAACQQELEAFLAHRDQITALDLAGDKLGFPGSLFLSHFNRARDAGWHITVHAGEAAGPESIWQAIRELGAERIGHGVKAIEDRALMDFLAEQQIGIESCLTSNIQTSTVADLAAHPLKTFLEHGIRASINTDDPGVQGVDIIHEYTVAAPAAGLSREQIRQAQINGLEMAFLSAEEKRALREKVAAK.

Residues His12 and His14 each coordinate Zn(2+). Positions 14, 16, and 170 each coordinate substrate. His197 contributes to the Zn(2+) binding site. Glu200 functions as the Proton donor in the catalytic mechanism. A Zn(2+)-binding site is contributed by Asp278. Asp279 serves as a coordination point for substrate.

This sequence belongs to the metallo-dependent hydrolases superfamily. Adenosine and AMP deaminases family. Adenosine deaminase subfamily. Requires Zn(2+) as cofactor.

The enzyme catalyses adenosine + H2O + H(+) = inosine + NH4(+). It carries out the reaction 2'-deoxyadenosine + H2O + H(+) = 2'-deoxyinosine + NH4(+). In terms of biological role, catalyzes the hydrolytic deamination of adenosine and 2-deoxyadenosine. The chain is Adenosine deaminase from Escherichia coli O81 (strain ED1a).